The following is a 558-amino-acid chain: Potassium-transporting ATPase potassium-binding subunit 2 (558 aa).

The next 12 membrane-spanning stretches (helical) occupy residues 1–21 (MSIV…SRYL), 60–80 (IKHF…LLLI), 129–149 (VITF…IAML), 169–189 (FIVR…ISQG), 246–266 (WSNY…VFLF), 281–301 (IMIF…CLYF), 326–346 (FGIG…TGTV), 353–373 (LTPL…VFGG), 376–396 (VGLM…SLMI), 415–435 (IALS…LAFI), 485–505 (IVML…VSSL), and 523–543 (LFFS…TFLP).

The protein belongs to the KdpA family. As to quaternary structure, the system is composed of three essential subunits: KdpA, KdpB and KdpC.

It localises to the cell membrane. Part of the high-affinity ATP-driven potassium transport (or Kdp) system, which catalyzes the hydrolysis of ATP coupled with the electrogenic transport of potassium into the cytoplasm. This subunit binds the extracellular potassium ions and delivers the ions to the membrane domain of KdpB through an intramembrane tunnel. The chain is Potassium-transporting ATPase potassium-binding subunit 2 from Staphylococcus aureus (strain Mu50 / ATCC 700699).